The chain runs to 289 residues: Acetyl-coenzyme A carboxylase carboxyl transferase subunit beta (289 aa).

Residues 28–289 form the CoA carboxyltransferase N-terminal domain; that stretch reads VMTKCPKCKK…QGGEMAVWQS (262 aa). Residues cysteine 32, cysteine 35, cysteine 51, and cysteine 54 each contribute to the Zn(2+) site. A C4-type zinc finger spans residues 32–54; it reads CPKCKKIMYTKELLKNLKVCVNC.

The protein belongs to the AccD/PCCB family. As to quaternary structure, acetyl-CoA carboxylase is a heterohexamer composed of biotin carboxyl carrier protein (AccB), biotin carboxylase (AccC) and two subunits each of ACCase subunit alpha (AccA) and ACCase subunit beta (AccD). Zn(2+) is required as a cofactor.

The protein resides in the cytoplasm. The enzyme catalyses N(6)-carboxybiotinyl-L-lysyl-[protein] + acetyl-CoA = N(6)-biotinyl-L-lysyl-[protein] + malonyl-CoA. The protein operates within lipid metabolism; malonyl-CoA biosynthesis; malonyl-CoA from acetyl-CoA: step 1/1. In terms of biological role, component of the acetyl coenzyme A carboxylase (ACC) complex. Biotin carboxylase (BC) catalyzes the carboxylation of biotin on its carrier protein (BCCP) and then the CO(2) group is transferred by the transcarboxylase to acetyl-CoA to form malonyl-CoA. The polypeptide is Acetyl-coenzyme A carboxylase carboxyl transferase subunit beta (Bacillus cereus (strain ATCC 10987 / NRS 248)).